We begin with the raw amino-acid sequence, 604 residues long: Elongation factor 4 (604 aa).

Positions 7-189 (SRLRNFCIIA…AVVDRIPPPA (183 aa)) constitute a tr-type G domain. Residues 19-24 (DHGKST) and 136-139 (NKID) each bind GTP.

The protein belongs to the TRAFAC class translation factor GTPase superfamily. Classic translation factor GTPase family. LepA subfamily.

It is found in the cell inner membrane. It carries out the reaction GTP + H2O = GDP + phosphate + H(+). Functionally, required for accurate and efficient protein synthesis under certain stress conditions. May act as a fidelity factor of the translation reaction, by catalyzing a one-codon backward translocation of tRNAs on improperly translocated ribosomes. Back-translocation proceeds from a post-translocation (POST) complex to a pre-translocation (PRE) complex, thus giving elongation factor G a second chance to translocate the tRNAs correctly. Binds to ribosomes in a GTP-dependent manner. The chain is Elongation factor 4 from Prochlorococcus marinus (strain MIT 9313).